The following is a 158-amino-acid chain: 6,7-dimethyl-8-ribityllumazine synthase (158 aa).

Residues Phe23, 61-63, and 85-87 each bind 5-amino-6-(D-ribitylamino)uracil; these read SFE and AVI. 90–91 provides a ligand contact to (2S)-2-hydroxy-3-oxobutyl phosphate; the sequence is DT. His93 acts as the Proton donor in catalysis. Residue Phe118 coordinates 5-amino-6-(D-ribitylamino)uracil. A (2S)-2-hydroxy-3-oxobutyl phosphate-binding site is contributed by Arg132.

Belongs to the DMRL synthase family.

It catalyses the reaction (2S)-2-hydroxy-3-oxobutyl phosphate + 5-amino-6-(D-ribitylamino)uracil = 6,7-dimethyl-8-(1-D-ribityl)lumazine + phosphate + 2 H2O + H(+). Its pathway is cofactor biosynthesis; riboflavin biosynthesis; riboflavin from 2-hydroxy-3-oxobutyl phosphate and 5-amino-6-(D-ribitylamino)uracil: step 1/2. Functionally, catalyzes the formation of 6,7-dimethyl-8-ribityllumazine by condensation of 5-amino-6-(D-ribitylamino)uracil with 3,4-dihydroxy-2-butanone 4-phosphate. This is the penultimate step in the biosynthesis of riboflavin. This chain is 6,7-dimethyl-8-ribityllumazine synthase, found in Prochlorococcus marinus (strain NATL1A).